The sequence spans 223 residues: Neurotrophic factor BDNF precursor form (223 aa).

The signal sequence occupies residues 1 to 5; that stretch reads SCMKA. A propeptide spanning residues 6–114 is cleaved from the precursor; the sequence is APMKEVSIRG…AANMSMRVRR (109 aa). The N-linked (GlcNAc...) asparagine glycan is linked to asparagine 107. Cystine bridges form between cysteine 127–cysteine 194 and cysteine 172–cysteine 223.

The protein belongs to the NGF-beta family.

It is found in the secreted. Promotes the survival of neuronal populations that are all located either in the central nervous system or directly connected to it. This chain is Neurotrophic factor BDNF precursor form (BDNF), found in Lichanura trivirgata (Rosy boa).